The following is a 604-amino-acid chain: Kelch-like protein 15 (604 aa).

The 68-residue stretch at 31 to 98 (LDVTLLIEEH…MYYGSLELSM (68 aa)) folds into the BTB domain. Residues 133-237 (CAEVMRLLED…TPANIFEKVK (105 aa)) enclose the BACK domain. Kelch repeat units follow at residues 328–379 (FAFL…VIGK), 381–426 (IYAV…VLNG), 428–473 (LYIT…NKSK), 489–542 (KLYV…VLDK), and 544–592 (IMVL…SLHF).

The protein localises to the nucleus. The protein operates within protein modification; protein ubiquitination. Functionally, substrate-specific adapter for an E3 ubiquitin-protein ligase complex. This Danio rerio (Zebrafish) protein is Kelch-like protein 15 (klhl15).